The following is a 304-amino-acid chain: Glutaminase (304 aa).

Serine 63, asparagine 113, glutamate 157, asparagine 164, tyrosine 188, tyrosine 240, and valine 258 together coordinate substrate.

Belongs to the glutaminase family. Homotetramer.

It carries out the reaction L-glutamine + H2O = L-glutamate + NH4(+). This Chromobacterium violaceum (strain ATCC 12472 / DSM 30191 / JCM 1249 / CCUG 213 / NBRC 12614 / NCIMB 9131 / NCTC 9757 / MK) protein is Glutaminase.